A 192-amino-acid chain; its full sequence is Epididymal-specific lipocalin-5 (192 aa).

A signal peptide spans 1-26 (MCSVARHMESIMLFTLLGLCVGLAAG). The cysteines at positions 89 and 183 are disulfide-linked.

The protein belongs to the calycin superfamily. Lipocalin family. 2 different forms with differently processed N-termini exist. As to expression, epididymal fluid of the caudal and corpus regions (at protein level).

The protein localises to the secreted. Associates with spermatozoa in the epididymal fluid but does not bind tightly to them. Binds both all-trans and 13-cis retinoic acid. May act as a retinoid carrier protein which is required for epididymal function and/or sperm maturation. The protein is Epididymal-specific lipocalin-5 of Mus musculus (Mouse).